The chain runs to 557 residues: Inositol-3-phosphate synthase 1 (557 aa).

Residues G67, G68, N69, N70, D141, S177, V178, Q188, R191, T228, A229, N230, T231, G278, S279, D303, S306, N337, N338, D339, and K352 each contribute to the NAD(+) site. At S279 the chain carries Phosphoserine. Residue S357 is modified to Phosphoserine. Positions 390, 391, 419, and 420 each coordinate NAD(+). The disordered stretch occupies residues 512–557 (GPGIKPGEVVATSPLPCKKEPTPATNGCTGDANGHPQAPTPKLSTA). Position 524 is a phosphoserine (S524).

It belongs to the myo-inositol 1-phosphate synthase family. NAD(+) serves as cofactor. In terms of tissue distribution, in testis, it is expressed in Sertoli cells. Highly expressed in 2 types of germ cells, pachytene spermatocytes and round spermatids.

It is found in the cytoplasm. The enzyme catalyses D-glucose 6-phosphate = 1D-myo-inositol 3-phosphate. The protein operates within polyol metabolism; myo-inositol biosynthesis; myo-inositol from D-glucose 6-phosphate: step 1/2. In terms of biological role, key enzyme in myo-inositol biosynthesis pathway that catalyzes the conversion of glucose 6-phosphate to 1-myo-inositol 1-phosphate in a NAD-dependent manner. Rate-limiting enzyme in the synthesis of all inositol-containing compounds. The sequence is that of Inositol-3-phosphate synthase 1 (Isyna1) from Mus musculus (Mouse).